A 465-amino-acid polypeptide reads, in one-letter code: 3-isopropylmalate dehydratase large subunit (465 aa).

3 residues coordinate [4Fe-4S] cluster: Cys-347, Cys-407, and Cys-410. Residues 416 to 443 (DTLRPGERSASTSNRNFEGRQGPGGRTH) are disordered.

This sequence belongs to the aconitase/IPM isomerase family. LeuC type 1 subfamily. Heterodimer of LeuC and LeuD. Requires [4Fe-4S] cluster as cofactor.

It catalyses the reaction (2R,3S)-3-isopropylmalate = (2S)-2-isopropylmalate. It participates in amino-acid biosynthesis; L-leucine biosynthesis; L-leucine from 3-methyl-2-oxobutanoate: step 2/4. Its function is as follows. Catalyzes the isomerization between 2-isopropylmalate and 3-isopropylmalate, via the formation of 2-isopropylmaleate. This chain is 3-isopropylmalate dehydratase large subunit, found in Frankia alni (strain DSM 45986 / CECT 9034 / ACN14a).